A 342-amino-acid chain; its full sequence is L-threonine 3-dehydrogenase (342 aa).

Cys-38 serves as a coordination point for Zn(2+). Catalysis depends on charge relay system residues Thr-40 and His-43. Residues His-63, Glu-64, Cys-93, Cys-96, Cys-99, and Cys-107 each contribute to the Zn(2+) site. NAD(+)-binding positions include Ile-175, Asp-195, Arg-200, 262 to 264, and 286 to 287; these read LGL and IY.

This sequence belongs to the zinc-containing alcohol dehydrogenase family. Homotetramer. Zn(2+) serves as cofactor.

Its subcellular location is the cytoplasm. The catalysed reaction is L-threonine + NAD(+) = (2S)-2-amino-3-oxobutanoate + NADH + H(+). The protein operates within amino-acid degradation; L-threonine degradation via oxydo-reductase pathway; glycine from L-threonine: step 1/2. Functionally, catalyzes the NAD(+)-dependent oxidation of L-threonine to 2-amino-3-ketobutyrate. In Streptomyces coelicolor (strain ATCC BAA-471 / A3(2) / M145), this protein is L-threonine 3-dehydrogenase.